A 107-amino-acid chain; its full sequence is L-amino-acid oxidase (107 aa).

Residue 35–38 (GPMR) participates in FAD binding. Positions 38 and 49 each coordinate substrate.

This sequence belongs to the flavin monoamine oxidase family. FIG1 subfamily. Homodimer; non-covalently linked. FAD serves as cofactor. Post-translationally, N-glycosylated. As to expression, expressed by the venom gland.

It is found in the secreted. The catalysed reaction is an L-alpha-amino acid + O2 + H2O = a 2-oxocarboxylate + H2O2 + NH4(+). The enzyme catalyses L-leucine + O2 + H2O = 4-methyl-2-oxopentanoate + H2O2 + NH4(+). It carries out the reaction L-phenylalanine + O2 + H2O = 3-phenylpyruvate + H2O2 + NH4(+). It catalyses the reaction L-tryptophan + O2 + H2O = indole-3-pyruvate + H2O2 + NH4(+). The catalysed reaction is L-methionine + O2 + H2O = 4-methylsulfanyl-2-oxobutanoate + H2O2 + NH4(+). The enzyme catalyses L-isoleucine + O2 + H2O = (S)-3-methyl-2-oxopentanoate + H2O2 + NH4(+). It carries out the reaction L-arginine + O2 + H2O = 5-guanidino-2-oxopentanoate + H2O2 + NH4(+). It catalyses the reaction L-histidine + O2 + H2O = 3-(imidazol-5-yl)pyruvate + H2O2 + NH4(+). Catalyzes an oxidative deamination of predominantly hydrophobic and aromatic L-amino acids, thus producing hydrogen peroxide that may contribute to the diverse toxic effects of this enzyme. Shows high activity on L-Met, moderate activity on L-Trp, L-Leu, L-His, L-Phe, L-Arg, L-Ile, low activity on L-Val, L-Glu, L-Lys, L-Gln, L-Asn, L-Tyr, L-Ala, and no activity on L-Asp, L-Ser, L-Pro, L-Gly, L-Thr and L-Cys. Shows antimicrobial activity inhibiting the growth of both Gram-negative and Gram-positive bacteria. Also inhibits platelet aggregation induced by ADP or collagen. Effects of snake L-amino oxidases on platelets are controversial, since they either induce aggregation or inhibit agonist-induced aggregation. These different effects are probably due to different experimental conditions. This protein may also induce hemorrhage, hemolysis, edema, apoptosis, and have antiparasitic activities. The protein is L-amino-acid oxidase of Macrovipera lebetinus (Levantine viper).